The following is a 1938-amino-acid chain: Myosin-1 (1938 aa).

Positions 33 to 82 (DAKTSVFVADPKESFVKATVQSREGGKVTAKTEAGATVTVKEDQVFPMNP) constitute a Myosin N-terminal SH3-like domain. Phosphothreonine occurs at positions 64 and 69. Positions 86 to 781 (DKIEDMAMMT…LLGLLEEMRD (696 aa)) constitute a Myosin motor domain. Residue K130 is modified to N6,N6,N6-trimethyllysine. Residue 179-186 (GESGAGKT) participates in ATP binding. Residue Y389 is modified to Phosphotyrosine. T419 carries the phosphothreonine modification. Y424 is subject to Phosphotyrosine. S625 carries the phosphoserine modification. Positions 658-680 (LNKLMTNLRSTHPHFVRCIIPNE) are actin-binding. H756 carries the post-translational modification Pros-methylhistidine. Residues 760–774 (KFGHTKVFFKAGLLG) form an actin-binding region. An IQ domain is found at 784 to 813 (LAQLITRTQARCRGFLARVEYQKMVERRES). Residues 842–1938 (LLKSAETEKE…EVHTKIISEE (1097 aa)) are a coiled coil. Residues S1091 and S1095 each carry the phosphoserine modification. Disordered regions lie at residues 1124–1146 (EIEAERASRAKAEKQRSDLSREL) and 1152–1171 (RLEEAGGATSAQIEMNKKRE). Positions 1127-1146 (AERASRAKAEKQRSDLSREL) are enriched in basic and acidic residues. Residues S1161 and S1236 each carry the phosphoserine modification. T1240 is subject to Phosphothreonine. Phosphoserine occurs at positions 1242 and 1260. A phosphothreonine mark is found at T1264 and T1285. Phosphoserine is present on residues S1287, S1291, S1302, and S1305. At Y1463 the chain carries Phosphotyrosine. Position 1466 is a phosphothreonine (T1466). Phosphoserine is present on S1473. A Phosphotyrosine modification is found at Y1491. A Phosphoserine modification is found at S1494. T1500 carries the post-translational modification Phosphothreonine. The residue at position 1513 (S1513) is a Phosphoserine. The residue at position 1516 (T1516) is a Phosphothreonine. S1541, S1553, S1573, S1599, S1602, S1713, and S1725 each carry phosphoserine. Residues T1729 and T1735 each carry the phosphothreonine modification.

This sequence belongs to the TRAFAC class myosin-kinesin ATPase superfamily. Myosin family. Muscle myosin is a hexameric protein that consists of 2 heavy chain subunits (MHC), 2 alkali light chain subunits (MLC) and 2 regulatory light chain subunits (MLC-2). Interacts with SLC26A5.

Its subcellular location is the cytoplasm. It is found in the myofibril. Required for normal hearing. It plays a role in cochlear amplification of auditory stimuli, likely through the positive regulation of prestin (SLC26A5) activity and outer hair cell (OHC) electromotility. The chain is Myosin-1 (MYH1) from Bos taurus (Bovine).